Consider the following 100-residue polypeptide: Large ribosomal subunit protein bL21 (100 aa).

This sequence belongs to the bacterial ribosomal protein bL21 family. In terms of assembly, part of the 50S ribosomal subunit. Contacts protein L20.

In terms of biological role, this protein binds to 23S rRNA in the presence of protein L20. This Corynebacterium urealyticum (strain ATCC 43042 / DSM 7109) protein is Large ribosomal subunit protein bL21.